A 431-amino-acid polypeptide reads, in one-letter code: Enolase (431 aa).

Glutamine 167 is a binding site for (2R)-2-phosphoglycerate. Catalysis depends on glutamate 209, which acts as the Proton donor. Residues aspartate 246, glutamate 289, and aspartate 316 each coordinate Mg(2+). Positions 341, 370, 371, and 392 each coordinate (2R)-2-phosphoglycerate. Lysine 341 serves as the catalytic Proton acceptor.

It belongs to the enolase family. As to quaternary structure, component of the RNA degradosome, a multiprotein complex involved in RNA processing and mRNA degradation. It depends on Mg(2+) as a cofactor.

It is found in the cytoplasm. The protein localises to the secreted. The protein resides in the cell surface. It carries out the reaction (2R)-2-phosphoglycerate = phosphoenolpyruvate + H2O. Its pathway is carbohydrate degradation; glycolysis; pyruvate from D-glyceraldehyde 3-phosphate: step 4/5. Catalyzes the reversible conversion of 2-phosphoglycerate (2-PG) into phosphoenolpyruvate (PEP). It is essential for the degradation of carbohydrates via glycolysis. The chain is Enolase from Marinobacter nauticus (strain ATCC 700491 / DSM 11845 / VT8) (Marinobacter aquaeolei).